Consider the following 85-residue polypeptide: Contulakin-Lt2 (85 aa).

Positions 1-22 (MQMAYWVMVMMMVGITAPLSEG) are cleaved as a signal peptide. Residues 23–61 (RKLNDAIRGLVPNDLTPQLLQSLVSRRHRVFHLDNTYLK) constitute a propeptide that is removed on maturation. Cysteine 65 and cysteine 70 are oxidised to a cystine. Positions 76–85 (RRRDLKKRNK) are excised as a propeptide.

This sequence belongs to the conotoxin C superfamily. In terms of tissue distribution, expressed by the venom duct.

It localises to the secreted. Functionally, acts as an agonist of neurotensin receptors. It binds to human neurotensin type 1 receptor (NTSR1), rat neurotensin types 1 and 2 receptors (NTSR1/NTSR2) and mouse neurotensin type 3 receptor (SORT1). The polypeptide is Contulakin-Lt2 (Conus litteratus (Lettered cone)).